The sequence spans 209 residues: Mei4-dependent protein 1 (209 aa).

The N-terminal stretch at 1 to 22 is a signal peptide; that stretch reads MLHATQLCYLLLFCFLPISISS.

The protein resides in the secreted. This Schizosaccharomyces pombe (strain 972 / ATCC 24843) (Fission yeast) protein is Mei4-dependent protein 1 (mde1).